Reading from the N-terminus, the 361-residue chain is Peptide chain release factor 1 (361 aa).

The residue at position 237 (Q237) is an N5-methylglutamine. Residues 285-296 (DEKRRSAEESTR) are compositionally biased toward basic and acidic residues. The tract at residues 285-305 (DEKRRSAEESTRRNLVGSGDR) is disordered.

Belongs to the prokaryotic/mitochondrial release factor family. Post-translationally, methylated by PrmC. Methylation increases the termination efficiency of RF1.

The protein resides in the cytoplasm. Its function is as follows. Peptide chain release factor 1 directs the termination of translation in response to the peptide chain termination codons UAG and UAA. The protein is Peptide chain release factor 1 of Shewanella sediminis (strain HAW-EB3).